The primary structure comprises 254 residues: Alcohol dehydrogenase 2 (254 aa).

10-33 (FVAGLGGIGFDTSREIVKRGPKNL) serves as a coordination point for NAD(+). Ser138 contributes to the substrate binding site. Catalysis depends on Tyr151, which acts as the Proton acceptor.

It belongs to the short-chain dehydrogenases/reductases (SDR) family. In terms of assembly, homodimer.

It carries out the reaction a primary alcohol + NAD(+) = an aldehyde + NADH + H(+). The catalysed reaction is a secondary alcohol + NAD(+) = a ketone + NADH + H(+). This Drosophila mojavensis (Fruit fly) protein is Alcohol dehydrogenase 2 (Adh2).